The following is a 214-amino-acid chain: Small ribosomal subunit protein uS3c (214 aa).

The 73-residue stretch at 39–111 folds into the KH type-2 domain; sequence IRTYIHTISK…QLTINVLEVE (73 aa).

Belongs to the universal ribosomal protein uS3 family. Part of the 30S ribosomal subunit.

It is found in the plastid. Its subcellular location is the chloroplast. The polypeptide is Small ribosomal subunit protein uS3c (rps3) (Phaeodactylum tricornutum (strain CCAP 1055/1)).